The following is a 203-amino-acid chain: Urease accessory protein UreG (203 aa).

14–21 serves as a coordination point for GTP; sequence GPVGSGKT.

Belongs to the SIMIBI class G3E GTPase family. UreG subfamily. Homodimer. UreD, UreF and UreG form a complex that acts as a GTP-hydrolysis-dependent molecular chaperone, activating the urease apoprotein by helping to assemble the nickel containing metallocenter of UreC. The UreE protein probably delivers the nickel.

The protein localises to the cytoplasm. Facilitates the functional incorporation of the urease nickel metallocenter. This process requires GTP hydrolysis, probably effectuated by UreG. The chain is Urease accessory protein UreG from Allorhizobium ampelinum (strain ATCC BAA-846 / DSM 112012 / S4) (Agrobacterium vitis (strain S4)).